A 93-amino-acid polypeptide reads, in one-letter code: Large ribosomal subunit protein bL27 (93 aa).

Positions 1 to 9 are excised as a propeptide; that stretch reads MLQLNLQFF. A disordered region spans residues 14-33; it reads GVGSTKNGRDSISKRLGAKR.

It belongs to the bacterial ribosomal protein bL27 family. In terms of processing, the N-terminus is cleaved by ribosomal processing cysteine protease Prp.

The chain is Large ribosomal subunit protein bL27 from Exiguobacterium sp. (strain ATCC BAA-1283 / AT1b).